Reading from the N-terminus, the 1518-residue chain is Putative cellulose synthase 2 (1518 aa).

Residues 1-731 (MYGTWFTTGK…EEKLEKQSFV (731 aa)) form a catalytic region. Transmembrane regions (helical) follow at residues 24 to 44 (PVWVPVVLGVVLMAFVGSVRI), 71 to 91 (ITVFLMMLSLLVSLRYIVWRL), and 105 to 125 (LAVLLLLAEAYALMTLCLSYF). The interval 144–237 (QWPSVDVFVP…FAVIFDCDHV (94 aa)) is catalytic subdomain A. Aspartate 186 is an active-site residue. The substrate site is built by aspartate 233 and aspartate 235. Positions 314–374 (EAVMGIGGFA…GQRVRWARGM (61 aa)) are catalytic subdomain B. The active site involves aspartate 330. A run of 5 helical transmembrane segments spans residues 404-424 (FLFAIPRLTFLVSPLAFLFLG), 427-447 (IIAASPLAISVYALPHIFHSV), 465-485 (IYETSLALFLVRITIVTLLQP), 514-534 (ILAGVLCAALLRGVFGIVWQF), and 543-563 (FILNTLWVVISLIIVLASIAV). The 100-residue stretch at 569–668 (QTRNAPRVSV…ERQVVSMVFG (100 aa)) folds into the PilZ domain. A cyclic di-GMP binding domain region spans residues 732 to 1518 (LKPVPRSARH…IARDDLTGEL (787 aa)). A disordered region spans residues 765-785 (APSPDQSGVTAETPFGDSNTG). The span at 768–785 (PDQSGVTAETPFGDSNTG) shows a compositional bias: polar residues. A helical membrane pass occupies residues 1481–1501 (ALYLAGLAGAGLAALGVWAWL).

In the N-terminal section; belongs to the glycosyltransferase 2 family. It in the C-terminal section; belongs to the AcsB/BcsB family.

It localises to the cell inner membrane. The catalysed reaction is [(1-&gt;4)-beta-D-glucosyl](n) + UDP-alpha-D-glucose = [(1-&gt;4)-beta-D-glucosyl](n+1) + UDP + H(+). The protein operates within glycan metabolism; bacterial cellulose biosynthesis. The chain is Putative cellulose synthase 2 (bcsABII-A) from Komagataeibacter xylinus (Gluconacetobacter xylinus).